Reading from the N-terminus, the 29-residue chain is Cysteine-rich venom protein 25-A (29 aa).

This sequence belongs to the CRISP family. In terms of processing, contains 8 disulfide bonds. Expressed by the venom gland.

The protein resides in the secreted. This Naja haje haje (Egyptian cobra) protein is Cysteine-rich venom protein 25-A.